The primary structure comprises 509 residues: Lysine--tRNA ligase (509 aa).

Mg(2+) is bound by residues E418 and E425.

It belongs to the class-II aminoacyl-tRNA synthetase family. In terms of assembly, homodimer. Mg(2+) serves as cofactor.

The protein localises to the cytoplasm. It catalyses the reaction tRNA(Lys) + L-lysine + ATP = L-lysyl-tRNA(Lys) + AMP + diphosphate. The protein is Lysine--tRNA ligase of Acinetobacter baumannii (strain AB307-0294).